Reading from the N-terminus, the 438-residue chain is 23S rRNA (uracil(1939)-C(5))-methyltransferase RlmD (438 aa).

A TRAM domain is found at 10 to 69; it reads KASVNTKHLSVDVVRLDHNSAGIAFVDKKPVFIEGALPEEQAIIQFIEQKKQYSRAKLIK. [4Fe-4S] cluster contacts are provided by Cys82, Cys88, Cys91, and Cys169. S-adenosyl-L-methionine contacts are provided by Gln272, Phe301, Asn306, Glu322, Asn349, and Asp370. The Nucleophile role is filled by Cys396.

The protein belongs to the class I-like SAM-binding methyltransferase superfamily. RNA M5U methyltransferase family. RlmD subfamily.

The catalysed reaction is uridine(1939) in 23S rRNA + S-adenosyl-L-methionine = 5-methyluridine(1939) in 23S rRNA + S-adenosyl-L-homocysteine + H(+). Functionally, catalyzes the formation of 5-methyl-uridine at position 1939 (m5U1939) in 23S rRNA. This chain is 23S rRNA (uracil(1939)-C(5))-methyltransferase RlmD, found in Aliivibrio salmonicida (strain LFI1238) (Vibrio salmonicida (strain LFI1238)).